The following is a 450-amino-acid chain: Putative nucleolar protein 5-3 (450 aa).

Residues 252–370 (IAPNLTALVG…LEARLRNLEG (119 aa)) form the Nop domain. The disordered stretch occupies residues 375–423 (ACEEEEEVNDKDTKKEADDEEEPKTEECSKKRKKEAELETVEDPAKKSK). The span at 399–423 (TEECSKKRKKEAELETVEDPAKKSK) shows a compositional bias: basic and acidic residues.

It belongs to the NOP5/NOP56 family.

Its subcellular location is the nucleus. The protein localises to the nucleolus. In terms of biological role, required for 60S ribosomal subunit biogenesis. The polypeptide is Putative nucleolar protein 5-3 (NOP5-3) (Arabidopsis thaliana (Mouse-ear cress)).